The chain runs to 328 residues: uncharacterized protein (328 aa).

Residues 37 to 179 form the SIS domain; the sequence is LTERLLCHQG…AMTVLRCRKI (143 aa). Position 52–57 (52–57) interacts with ATP; it reads GIGKSG. CBS domains are found at residues 205-264 and 273-328; these read LSPR…GGAI and MTRK…AGLL.

Belongs to the SIS family. GutQ/KpsF subfamily.

This is an uncharacterized protein from Chlamydia muridarum (strain MoPn / Nigg).